The following is a 281-amino-acid chain: Predicted GPI-anchored protein 39 (281 aa).

A signal peptide spans 1 to 18 (MKATTFTLLLSIATAINA). Disordered regions lie at residues 52–94 (HHHG…SASV) and 106–227 (VSVS…SSSE). Low complexity-rich tracts occupy residues 69–94 (SSSSVSESTVEELSTTTTTESVSASV), 106–158 (VSVS…STTD), 167–203 (ATDSVETTFESVSNTEDLSSSSSSIITDSSESTIEET), and 210–227 (SVPSSLSEEYSTSGSSSE). Asn-150 is a glycosylation site (N-linked (GlcNAc...) asparagine). N-linked (GlcNAc...) asparagine glycans are attached at residues Asn-239, Asn-246, Asn-249, and Asn-252. A lipid anchor (GPI-anchor amidated serine) is attached at Ser-256. Positions 257–281 (ANFAIQYGTDYGVAVVAAIVGALLI) are cleaved as a propeptide — removed in mature form.

It is found in the cell membrane. The sequence is that of Predicted GPI-anchored protein 39 (PGA39) from Candida albicans (strain SC5314 / ATCC MYA-2876) (Yeast).